The chain runs to 168 residues: Gremlin-2 (168 aa).

The signal sequence occupies residues 1 to 21; the sequence is MFWKLSLTLLLVAVLVKVAET. N-linked (GlcNAc...) asparagine glycosylation is present at asparagine 40. Cystine bridges form between cysteine 73–cysteine 123, cysteine 87–cysteine 137, cysteine 97–cysteine 155, and cysteine 101–cysteine 157. Residues 73-163 enclose the CTCK domain; it reads CKTQPLRQTV…HCRCMSVNLS (91 aa). Asparagine 161 carries an N-linked (GlcNAc...) asparagine glycan.

It belongs to the DAN family. Homodimer. Interacts with BMP2, BMP4 and BMP7, but has lower affinity for BMP7 than for BMP2 and BMP4. Binds heparin; this impairs the interaction with BMP2. In terms of processing, N-glycosylated. Highly expressed in the ovary, followed by brain, spleen, colon, kidney and uterus. In ovary expressed in granulosa cells of selective early antral follicles.

The protein resides in the secreted. Functionally, cytokine that inhibits the activity of BMP2 and BMP4 in a dose-dependent manner, and thereby modulates signaling by BMP family members. Contributes to the regulation of embryonic morphogenesis via BMP family members. Antagonizes BMP4-induced suppression of progesterone production in granulosa cells. This Mus musculus (Mouse) protein is Gremlin-2 (Grem2).